Consider the following 202-residue polypeptide: ATP-dependent Clp protease proteolytic subunit (202 aa).

Serine 106 acts as the Nucleophile in catalysis. Histidine 131 is an active-site residue.

It belongs to the peptidase S14 family. As to quaternary structure, fourteen ClpP subunits assemble into 2 heptameric rings which stack back to back to give a disk-like structure with a central cavity, resembling the structure of eukaryotic proteasomes.

The protein resides in the cytoplasm. It catalyses the reaction Hydrolysis of proteins to small peptides in the presence of ATP and magnesium. alpha-casein is the usual test substrate. In the absence of ATP, only oligopeptides shorter than five residues are hydrolyzed (such as succinyl-Leu-Tyr-|-NHMec, and Leu-Tyr-Leu-|-Tyr-Trp, in which cleavage of the -Tyr-|-Leu- and -Tyr-|-Trp bonds also occurs).. Functionally, cleaves peptides in various proteins in a process that requires ATP hydrolysis. Has a chymotrypsin-like activity. Plays a major role in the degradation of misfolded proteins. The protein is ATP-dependent Clp protease proteolytic subunit of Albidiferax ferrireducens (strain ATCC BAA-621 / DSM 15236 / T118) (Rhodoferax ferrireducens).